The following is a 273-amino-acid chain: Cell division protein FtsQ (273 aa).

Residues 1–10 lie on the Cytoplasmic side of the membrane; sequence MWNDARTINL. The helical transmembrane segment at 11–31 threads the bilayer; sequence IANTLAVLAVAAMLLAGVAWV. Over 32 to 273 the chain is Periplasmic; the sequence is AQRPYFTLAA…HSKSKPAKKR (242 aa). Residues 37 to 110 form the POTRA domain; that stretch reads FTLAAIEIES…NTLRVRVEEQ (74 aa).

The protein belongs to the FtsQ/DivIB family. FtsQ subfamily. As to quaternary structure, part of a complex composed of FtsB, FtsL and FtsQ.

It is found in the cell inner membrane. In terms of biological role, essential cell division protein. May link together the upstream cell division proteins, which are predominantly cytoplasmic, with the downstream cell division proteins, which are predominantly periplasmic. May control correct divisome assembly. The protein is Cell division protein FtsQ of Bordetella pertussis (strain Tohama I / ATCC BAA-589 / NCTC 13251).